A 333-amino-acid chain; its full sequence is Phosphoenolpyruvate transferase (333 aa).

D65 contacts 7,8-didemethyl-8-hydroxy-5-deazariboflavin.

The protein belongs to the CofD family. Homodimer. Mg(2+) is required as a cofactor.

The enzyme catalyses enolpyruvoyl-2-diphospho-5'-guanosine + 7,8-didemethyl-8-hydroxy-5-deazariboflavin = dehydro coenzyme F420-0 + GMP + H(+). The protein operates within cofactor biosynthesis; coenzyme F420 biosynthesis. Functionally, catalyzes the transfer of the phosphoenolpyruvate moiety from enoylpyruvoyl-2-diphospho-5'-guanosine (EPPG) to 7,8-didemethyl-8-hydroxy-5-deazariboflavin (FO) with the formation of dehydro coenzyme F420-0 and GMP. This is Phosphoenolpyruvate transferase from Mycobacterium leprae (strain TN).